Consider the following 338-residue polypeptide: Rho GTPase-activating protein gacA (338 aa).

Residues 149-327 (NTLEHVEDEG…NVLSHKVAVH (179 aa)) enclose the Rho-GAP domain.

It localises to the cytoplasm. Rho GTPase-activating protein involved in the signal transduction pathway. The sequence is that of Rho GTPase-activating protein gacA (gacA) from Dictyostelium discoideum (Social amoeba).